We begin with the raw amino-acid sequence, 570 residues long: Urease subunit alpha (570 aa).

Residues 131-570 (GGFDAHIHFI…LPMAQRYFLF (440 aa)) enclose the Urease domain. Ni(2+)-binding residues include H136, H138, and K219. An N6-carboxylysine modification is found at K219. Position 221 (H221) interacts with substrate. H248 and H274 together coordinate Ni(2+). The Proton donor role is filled by H322. D362 serves as a coordination point for Ni(2+).

It belongs to the metallo-dependent hydrolases superfamily. Urease alpha subunit family. Heterotrimer of UreA (gamma), UreB (beta) and UreC (alpha) subunits. Three heterotrimers associate to form the active enzyme. Ni cation is required as a cofactor. Post-translationally, carboxylation allows a single lysine to coordinate two nickel ions.

It is found in the cytoplasm. The catalysed reaction is urea + 2 H2O + H(+) = hydrogencarbonate + 2 NH4(+). It participates in nitrogen metabolism; urea degradation; CO(2) and NH(3) from urea (urease route): step 1/1. The sequence is that of Urease subunit alpha from Mesorhizobium japonicum (strain LMG 29417 / CECT 9101 / MAFF 303099) (Mesorhizobium loti (strain MAFF 303099)).